The sequence spans 307 residues: ATP synthase gamma chain (307 aa).

It belongs to the ATPase gamma chain family. F-type ATPases have 2 components, CF(1) - the catalytic core - and CF(0) - the membrane proton channel. CF(1) has five subunits: alpha(3), beta(3), gamma(1), delta(1), epsilon(1). CF(0) has three main subunits: a, b and c.

The protein localises to the cell membrane. In terms of biological role, produces ATP from ADP in the presence of a proton gradient across the membrane. The gamma chain is believed to be important in regulating ATPase activity and the flow of protons through the CF(0) complex. This chain is ATP synthase gamma chain, found in Mycolicibacterium smegmatis (strain ATCC 700084 / mc(2)155) (Mycobacterium smegmatis).